We begin with the raw amino-acid sequence, 248 residues long: Glycoprotein BILF2 (248 aa).

The signal sequence occupies residues 1–17 (MTHLVLLLCCCVGSVCA). The region spanning 19–125 (FSDLVKFENV…NVTLRNCSVA (107 aa)) is the Ig-like domain. 12 N-linked (GlcNAc...) asparagine; by host glycosylation sites follow: asparagine 27, asparagine 37, asparagine 45, asparagine 73, asparagine 83, asparagine 92, asparagine 95, asparagine 104, asparagine 116, asparagine 121, asparagine 131, and asparagine 144. The cysteines at positions 40 and 115 are disulfide-linked. A disordered region spans residues 167 to 191 (VSHTTSTSHRPHRRPVSKRPTHKPV). Residues 175–188 (HRPHRRPVSKRPTH) are compositionally biased toward basic residues. Residues 210–230 (WALLLITCAVVAPVLLIIIIS) form a helical membrane-spanning segment.

It belongs to the Epstein-Barr virus BILF2 protein family.

It localises to the membrane. This is Glycoprotein BILF2 from Epstein-Barr virus (strain B95-8) (HHV-4).